We begin with the raw amino-acid sequence, 354 residues long: MSQLETXYDVMRRQGITRRSFLKYCSLTGRPCLGPTFAPQIAHAMETRPPTPVVWLHGLECTCCSESFIRSGDPLVKDVVLSMISLDYDDTLMPPRHQGTVEETMRKYKGEYILAVEGNPPLNEDGMFCIVGGKPFLDQLKHAAKDAKAVIAWGSCASWGCVQAAKPNPTQAVPIHKVITDKPMIKVPGCPPIAEVMTGVITYMLTFGKLPELDRQGRPKMFYGQRIHDKSYRRPHFDAGQFVEHWDDEGARKGYCLYKVGCKGPTSYNACSTVRWNEGTSFPIQAGHGCIGCSEDGFWDKGSFYERLTTIPQFGIEKNADQIGPRGRRGSGAAIAAHAAVTAIKRLQNKGDQA.

Residues 1-44 constitute a signal peptide (tat-type signal); the sequence is MSQLETXYDVMRRQGITRRSFLKYCSLTGRPCLGPTFAPQIAHA. Residues Cys61, Cys64, Cys156, Cys190, His228, Ser231, Cys256, and Cys262 each contribute to the [4Fe-4S] cluster site. 3 residues coordinate [3Fe-4S] cluster: Cys271, Cys290, and Cys293.

The protein belongs to the [NiFe]/[NiFeSe] hydrogenase small subunit family. As to quaternary structure, heterodimer of a large and a small subunit. It depends on [4Fe-4S] cluster as a cofactor. [3Fe-4S] cluster serves as cofactor. Post-translationally, predicted to be exported by the Tat system. The position of the signal peptide cleavage has not been experimentally proven.

Its subcellular location is the cell membrane. It carries out the reaction H2 + A = AH2. Functionally, this enzyme recycles the H(2) produced by nitrogenase to increase the production of ATP and to protect nitrogenase against inhibition or damage by O(2) under carbon- or phosphate-limited conditions. This is Uptake hydrogenase small subunit (hupA) from Azotobacter chroococcum mcd 1.